The sequence spans 129 residues: Large ribosomal subunit protein bL19 (129 aa).

It belongs to the bacterial ribosomal protein bL19 family.

In terms of biological role, this protein is located at the 30S-50S ribosomal subunit interface and may play a role in the structure and function of the aminoacyl-tRNA binding site. The polypeptide is Large ribosomal subunit protein bL19 (Granulibacter bethesdensis (strain ATCC BAA-1260 / CGDNIH1)).